A 193-amino-acid chain; its full sequence is UPF0301 protein Fphi_1754 (193 aa).

It belongs to the UPF0301 (AlgH) family.

The sequence is that of UPF0301 protein Fphi_1754 from Francisella philomiragia subsp. philomiragia (strain ATCC 25017 / CCUG 19701 / FSC 153 / O#319-036).